Reading from the N-terminus, the 305-residue chain is MDSVDRFLYTSDHDGFLALTRETWQNRWFPSQIPLHLDVSHVHQLSDADKDFYRFLFTFLGMAERLVNFNIEDLVTNFNSHDVAHYYAEQVAMENIHGVVYANILKIFFNNSRGELLAYAAKIILDPALCEKLEWLHSRVRKATTKAQKILMFLIVEGIYFISSFYSISLCRVRGIMPGVCLANDYISRDELLHTKAASMLYNTMVEIQEKPSHAEVQALFREAVNIEIRFIQAKAAGVTLVNVVDIRRFLEATADRILRDIFVPPIFGTPPPEACPLSYTGSFKAVNFFERDNSDYTTCVTDDL.

Fe cation-binding residues include E64, E94, and H97. Y101 is an active-site residue. A helical transmembrane segment spans residues 150 to 170 (ILMFLIVEGIYFISSFYSISL). Fe cation is bound by residues E157, E191, and H194.

The protein belongs to the ribonucleoside diphosphate reductase small chain family. As to quaternary structure, heterotetramer composed of a homodimer of the large subunit (R1) and a homodimer of the small subunit (R2). Larger multisubunit protein complex are also active, composed of (R1)n(R2)n. The cofactor is Fe cation.

It localises to the host membrane. It carries out the reaction a 2'-deoxyribonucleoside 5'-diphosphate + [thioredoxin]-disulfide + H2O = a ribonucleoside 5'-diphosphate + [thioredoxin]-dithiol. Functionally, ribonucleoside-diphosphate reductase holoenzyme provides the precursors necessary for viral DNA synthesis. Allows virus growth in non-dividing cells, as well as reactivation from latency in infected hosts. Catalyzes the biosynthesis of deoxyribonucleotides from the corresponding ribonucleotides. The sequence is that of Ribonucleoside-diphosphate reductase small subunit from Homo sapiens (Human).